A 150-amino-acid polypeptide reads, in one-letter code: Large ribosomal subunit protein bL9 (150 aa).

It belongs to the bacterial ribosomal protein bL9 family.

In terms of biological role, binds to the 23S rRNA. The protein is Large ribosomal subunit protein bL9 of Corynebacterium glutamicum (strain ATCC 13032 / DSM 20300 / JCM 1318 / BCRC 11384 / CCUG 27702 / LMG 3730 / NBRC 12168 / NCIMB 10025 / NRRL B-2784 / 534).